The chain runs to 1009 residues: Delphilin (1009 aa).

5 disordered regions span residues 28 to 82, 170 to 193, 322 to 369, 414 to 635, and 990 to 1009; these read CRSK…SNTM, EGPV…RSRS, ASPD…SRDT, ELSS…SDNN, and SETQ…PLAW. The span at 44–53 shows a compositional bias: basic and acidic residues; that stretch reads RSQDHHERPQ. The 78-residue stretch at 95–172 folds into the PDZ domain; sequence TIRVYRGKKS…MPSLVVEEGP (78 aa). Residues 322 to 332 show a composition bias toward polar residues; it reads ASPDSVDSNPY. Composition is skewed to low complexity over residues 334 to 352 and 427 to 439; these read SLDS…SPLP and DDST…SGSD. 3 stretches are compositionally biased toward pro residues: residues 441-455, 462-477, and 484-493; these read IPPP…PPPL, SPLP…PPPA, and IAPPPPPPRP. Residues 521–535 are compositionally biased toward low complexity; it reads SSPQPSSQPILQLHQ. Positions 557-602 are enriched in polar residues; that stretch reads AQHTRLQHPSQSIYQSQQTTVPRTSPSLTKQKSLHSQPSQQSFEGT. Positions 607 to 628 are enriched in pro residues; sequence VPPPPPPPLPPPCDPPPLPKPS. Residues 629–1009 form the FH2 domain; sequence PKASDNNHMS…SPRIASPLAW (381 aa).

The protein localises to the postsynaptic cell membrane. Postsynaptic scaffolding protein. The sequence is that of Delphilin (grid2ip) from Danio rerio (Zebrafish).